Consider the following 67-residue polypeptide: Large ribosomal subunit protein uL29 (67 aa).

The protein belongs to the universal ribosomal protein uL29 family.

This is Large ribosomal subunit protein uL29 from Alkaliphilus metalliredigens (strain QYMF).